The primary structure comprises 80 residues: Serine palmitoyltransferase-regulating protein TSC3 (80 aa).

A helical membrane pass occupies residues 54-74 (FDSFFLHVFFLTIFSLSFFGI).

As to quaternary structure, interacts with the serine palmitoyltransferase complex LCB1-LCB2. Component of the SPOTS complex, at least composed of LCB1/2 (LCB1 and/or LCB2), ORM1/2 (ORM1 and/or ORM2), SAC1 and TSC3.

Its subcellular location is the endoplasmic reticulum membrane. Functionally, stimulates the activity of serine palmitoyltransferase (SPT), and thus plays a role in the biosynthesis of sphingolipids. This Saccharomyces cerevisiae (strain ATCC 204508 / S288c) (Baker's yeast) protein is Serine palmitoyltransferase-regulating protein TSC3 (TSC3).